We begin with the raw amino-acid sequence, 94 residues long: Signal peptidase complex subunit 1 (94 aa).

S2 bears the N-acetylserine mark. Residues 2-28 (SEILQDVQRKLVFPIDFPSQRKTEKFQ) are Cytoplasmic-facing. The helical transmembrane segment at 29–49 (QLSLMIGALVACILGFAQQSL) threads the bilayer. Position 50 (K50) is a topological domain, lumenal. A helical transmembrane segment spans residues 51-71 (VLLTAYGISCVITLICVLPAY). Residues 72–94 (PWYNKQKLRWAQPKIEINVDQYD) lie on the Cytoplasmic side of the membrane.

This sequence belongs to the SPCS1 family. As to quaternary structure, component of the signal peptidase complex (SPC) composed of a catalytic subunit SEC11 and three accessory subunits SPC1, SPC2 and SPC3. The complex induces a local thinning of the ER membrane which is used to measure the length of the signal peptide (SP) h-region of protein substrates. This ensures the selectivity of the complex towards h-regions shorter than 18-20 amino acids. SPC associates with the translocon complex. Interacts with SBH1 and SEB2/SBH2.

The protein localises to the endoplasmic reticulum membrane. In terms of biological role, component of the signal peptidase complex (SPC) which catalyzes the cleavage of N-terminal signal sequences from nascent proteins as they are translocated into the lumen of the endoplasmic reticulum. Dispensable for SPC enzymatic activity. The protein is Signal peptidase complex subunit 1 (SPC1) of Saccharomyces cerevisiae (strain ATCC 204508 / S288c) (Baker's yeast).